Reading from the N-terminus, the 237-residue chain is Ribosomal RNA small subunit methyltransferase G (237 aa).

S-adenosyl-L-methionine is bound by residues G78, F83, 129–130 (AE), and R148. The tract at residues 216–237 (SKKKETPNKYPRKAGTPNKKPL) is disordered.

This sequence belongs to the methyltransferase superfamily. RNA methyltransferase RsmG family.

It is found in the cytoplasm. Its function is as follows. Specifically methylates the N7 position of a guanine in 16S rRNA. The sequence is that of Ribosomal RNA small subunit methyltransferase G from Streptococcus agalactiae serotype Ia (strain ATCC 27591 / A909 / CDC SS700).